The sequence spans 259 residues: Phosphatidylglycerol--prolipoprotein diacylglyceryl transferase (259 aa).

Transmembrane regions (helical) follow at residues 12 to 32 (LAIH…VYLA), 41 to 61 (ISSD…IVGA), 80 to 100 (IIAI…GALV), and 109 to 129 (VLNP…AQAI). An a 1,2-diacyl-sn-glycero-3-phospho-(1'-sn-glycerol)-binding site is contributed by R131. Helical transmembrane passes span 167-187 (IPTF…IMMW), 194-214 (LLDG…RLVI), and 226-246 (GIRI…IFVI).

It belongs to the Lgt family.

The protein localises to the cell membrane. The catalysed reaction is L-cysteinyl-[prolipoprotein] + a 1,2-diacyl-sn-glycero-3-phospho-(1'-sn-glycerol) = an S-1,2-diacyl-sn-glyceryl-L-cysteinyl-[prolipoprotein] + sn-glycerol 1-phosphate + H(+). Its pathway is protein modification; lipoprotein biosynthesis (diacylglyceryl transfer). Its function is as follows. Catalyzes the transfer of the diacylglyceryl group from phosphatidylglycerol to the sulfhydryl group of the N-terminal cysteine of a prolipoprotein, the first step in the formation of mature lipoproteins. This Streptococcus pyogenes serotype M49 (strain NZ131) protein is Phosphatidylglycerol--prolipoprotein diacylglyceryl transferase.